Consider the following 290-residue polypeptide: Flap endonuclease Xni (290 aa).

Asp125 is a Mg(2+) binding site. The 95-residue stretch at 181-275 (VKTSQLIDFW…DIRLTTSSSA (95 aa)) folds into the 5'-3' exonuclease domain. Residues Leu192, Val203, and Ile206 each contribute to the K(+) site. Residues 205 to 210 (GIGQVT) form an interaction with DNA region.

The protein belongs to the Xni family. The cofactor is Mg(2+). It depends on K(+) as a cofactor.

Functionally, has flap endonuclease activity. During DNA replication, flap endonucleases cleave the 5'-overhanging flap structure that is generated by displacement synthesis when DNA polymerase encounters the 5'-end of a downstream Okazaki fragment. The sequence is that of Flap endonuclease Xni from Colwellia psychrerythraea (strain 34H / ATCC BAA-681) (Vibrio psychroerythus).